The chain runs to 436 residues: UPF0597 protein YhaM (436 aa).

Belongs to the UPF0597 family.

This chain is UPF0597 protein YhaM, found in Shigella flexneri serotype 5b (strain 8401).